Reading from the N-terminus, the 167-residue chain is Large ribosomal subunit protein bL9 (167 aa).

Belongs to the bacterial ribosomal protein bL9 family.

Its function is as follows. Binds to the 23S rRNA. This chain is Large ribosomal subunit protein bL9, found in Nitratidesulfovibrio vulgaris (strain DSM 19637 / Miyazaki F) (Desulfovibrio vulgaris).